The primary structure comprises 274 residues: Undecaprenyl-diphosphatase 1 (274 aa).

8 helical membrane-spanning segments follow: residues Leu-7–Val-27, Phe-48–Phe-68, Val-88–Phe-108, Leu-115–Gly-135, Val-151–Thr-171, Tyr-189–Leu-209, Phe-221–Ile-241, and Phe-253–Leu-273.

This sequence belongs to the UppP family.

It is found in the cell membrane. The catalysed reaction is di-trans,octa-cis-undecaprenyl diphosphate + H2O = di-trans,octa-cis-undecaprenyl phosphate + phosphate + H(+). Its function is as follows. Catalyzes the dephosphorylation of undecaprenyl diphosphate (UPP). Confers resistance to bacitracin. The polypeptide is Undecaprenyl-diphosphatase 1 (Clostridioides difficile (strain 630) (Peptoclostridium difficile)).